The chain runs to 266 residues: Ribonuclease 3 (266 aa).

An RNase III domain is found at 34–158; that stretch reads IERCQEILGY…VIAALYIDGG (125 aa). Residue Glu72 participates in Mg(2+) binding. Asp76 is a catalytic residue. Asp144 and Glu147 together coordinate Mg(2+). Glu147 is a catalytic residue. The region spanning 185–254 is the DRBM domain; sequence NHKSVLQQFA…AANALAELHN (70 aa).

It belongs to the ribonuclease III family. As to quaternary structure, homodimer. Mg(2+) serves as cofactor.

Its subcellular location is the cytoplasm. The enzyme catalyses Endonucleolytic cleavage to 5'-phosphomonoester.. Functionally, digests double-stranded RNA. Involved in the processing of primary rRNA transcript to yield the immediate precursors to the large and small rRNAs (23S and 16S). Processes some mRNAs, and tRNAs when they are encoded in the rRNA operon. Processes pre-crRNA and tracrRNA of type II CRISPR loci if present in the organism. The chain is Ribonuclease 3 from Rhodopirellula baltica (strain DSM 10527 / NCIMB 13988 / SH1).